A 204-amino-acid polypeptide reads, in one-letter code: Probable GTP-binding protein EngB (204 aa).

Residues 27–201 (SGIEIAFAGR…SEKLDQWFSP (175 aa)) form the EngB-type G domain. GTP contacts are provided by residues 35–42 (GRSNAGKS), 62–66 (GRTQL), 80–83 (DLPG), 147–150 (TKAD), and 180–182 (FSA). Positions 42 and 64 each coordinate Mg(2+).

Belongs to the TRAFAC class TrmE-Era-EngA-EngB-Septin-like GTPase superfamily. EngB GTPase family. It depends on Mg(2+) as a cofactor.

Functionally, necessary for normal cell division and for the maintenance of normal septation. This chain is Probable GTP-binding protein EngB, found in Histophilus somni (strain 129Pt) (Haemophilus somnus).